The sequence spans 319 residues: tRNA uridine(34) hydroxylase (319 aa).

Positions 127–221 (KQEDTVIIDA…YGKDPEVQGE (95 aa)) constitute a Rhodanese domain. Cys-181 acts as the Cysteine persulfide intermediate in catalysis.

Belongs to the TrhO family.

The enzyme catalyses uridine(34) in tRNA + AH2 + O2 = 5-hydroxyuridine(34) in tRNA + A + H2O. Its function is as follows. Catalyzes oxygen-dependent 5-hydroxyuridine (ho5U) modification at position 34 in tRNAs. This chain is tRNA uridine(34) hydroxylase, found in Bacillus cereus (strain G9842).